The following is a 193-amino-acid chain: MRLCDRDIEAWLDEGRLSITPRPPVERINGATVDVRLGNKFRTFRGHTAAFIDLSGPKDEVSAALDRVMSDEIVLPDGEAFYLHPGELALAVTFESVTLPPDLVGWLDGRSSLARLGLMVHVTAHRIDPGWSGCIVLEFYNSGKLPLALRPGMLIGALSFEPLSGPAARPYNRRQDAKYRDQQGAVASRIDKD.

Residues 110-115 (RSSLAR), Asp128, 136-138 (VLE), Tyr171, Lys178, and Gln182 contribute to the dCTP site. Residue Glu138 is the Proton donor/acceptor of the active site. A disordered region spans residues 169–193 (RPYNRRQDAKYRDQQGAVASRIDKD).

Belongs to the dCTP deaminase family. Homotrimer.

It carries out the reaction dCTP + H2O + H(+) = dUTP + NH4(+). It functions in the pathway pyrimidine metabolism; dUMP biosynthesis; dUMP from dCTP (dUTP route): step 1/2. Functionally, catalyzes the deamination of dCTP to dUTP. This is dCTP deaminase from Salmonella paratyphi B (strain ATCC BAA-1250 / SPB7).